The chain runs to 63 residues: Large ribosomal subunit protein uL29 (63 aa).

It belongs to the universal ribosomal protein uL29 family.

The protein is Large ribosomal subunit protein uL29 of Flavobacterium johnsoniae (strain ATCC 17061 / DSM 2064 / JCM 8514 / BCRC 14874 / CCUG 350202 / NBRC 14942 / NCIMB 11054 / UW101) (Cytophaga johnsonae).